Reading from the N-terminus, the 55-residue chain is MFLKLLISLSNKKNSSLNSISNEFNNNLNYSINNISNKNSITSVSYFTRPNFVNY.

This is an uncharacterized protein from Dictyostelium discoideum (Social amoeba).